The chain runs to 92 residues: Translation initiation factor IF-1 (92 aa).

One can recognise an S1-like domain in the interval Met-1–Lys-72. Residues Phe-69 to Arg-92 are disordered.

This sequence belongs to the IF-1 family. As to quaternary structure, component of the 30S ribosomal translation pre-initiation complex which assembles on the 30S ribosome in the order IF-2 and IF-3, IF-1 and N-formylmethionyl-tRNA(fMet); mRNA recruitment can occur at any time during PIC assembly.

The protein localises to the cytoplasm. Its function is as follows. One of the essential components for the initiation of protein synthesis. Stabilizes the binding of IF-2 and IF-3 on the 30S subunit to which N-formylmethionyl-tRNA(fMet) subsequently binds. Helps modulate mRNA selection, yielding the 30S pre-initiation complex (PIC). Upon addition of the 50S ribosomal subunit IF-1, IF-2 and IF-3 are released leaving the mature 70S translation initiation complex. The polypeptide is Translation initiation factor IF-1 (Rhodopseudomonas palustris (strain ATCC BAA-98 / CGA009)).